The following is a 200-amino-acid chain: Small ribosomal subunit protein eS8A (200 aa).

The interval 1-31 (MGISRDSRHKRSATGAKRAQFRKKRKFELGR) is disordered. Position 62 is a phosphothreonine (threonine 62). 4 positions are modified to phosphoserine: serine 66, serine 69, serine 73, and serine 86. The residue at position 107 (threonine 107) is a Phosphothreonine. Phosphoserine is present on residues serine 154, serine 155, serine 158, and serine 161.

Belongs to the eukaryotic ribosomal protein eS8 family. In terms of assembly, component of the small ribosomal subunit (SSU). Mature yeast ribosomes consist of a small (40S) and a large (60S) subunit. The 40S small subunit contains 1 molecule of ribosomal RNA (18S rRNA) and 33 different proteins (encoded by 57 genes). The large 60S subunit contains 3 rRNA molecules (25S, 5.8S and 5S rRNA) and 46 different proteins (encoded by 81 genes).

It localises to the cytoplasm. In terms of biological role, component of the ribosome, a large ribonucleoprotein complex responsible for the synthesis of proteins in the cell. The small ribosomal subunit (SSU) binds messenger RNAs (mRNAs) and translates the encoded message by selecting cognate aminoacyl-transfer RNA (tRNA) molecules. The large subunit (LSU) contains the ribosomal catalytic site termed the peptidyl transferase center (PTC), which catalyzes the formation of peptide bonds, thereby polymerizing the amino acids delivered by tRNAs into a polypeptide chain. The nascent polypeptides leave the ribosome through a tunnel in the LSU and interact with protein factors that function in enzymatic processing, targeting, and the membrane insertion of nascent chains at the exit of the ribosomal tunnel. The protein is Small ribosomal subunit protein eS8A of Saccharomyces cerevisiae (strain ATCC 204508 / S288c) (Baker's yeast).